Here is a 390-residue protein sequence, read N- to C-terminus: Large ribosomal subunit protein uL3y (390 aa).

Residues 1–36 (MSHRKFEHPRHGSLGFLPRKRASRHRGKVKAFPKDD) are disordered. Basic residues predominate over residues 18 to 31 (PRKRASRHRGKVKA).

The protein belongs to the universal ribosomal protein uL3 family.

The protein localises to the cytoplasm. This is Large ribosomal subunit protein uL3y (ARP2) from Arabidopsis thaliana (Mouse-ear cress).